We begin with the raw amino-acid sequence, 240 residues long: Terpene cyclase cdmG (240 aa).

6 consecutive transmembrane segments (helical) span residues 16 to 36 (YASI…LNYG), 48 to 68 (YGMA…YTVI), 78 to 98 (IIMT…IKFA), 112 to 132 (IPFI…ALAA), 134 to 154 (VGPG…LTIG), and 167 to 187 (GVSY…VICV). N-linked (GlcNAc...) asparagine glycosylation is present at Asn197. Residues 205 to 225 (IMKCFSGISLAVEIVYGVTLW) form a helical membrane-spanning segment.

Belongs to the paxB family.

It localises to the membrane. The enzyme catalyses verruculide C epoxide = 3-hydroxypentacecilide A. Its pathway is secondary metabolite biosynthesis; terpenoid biosynthesis. Terpene cyclase; part of the gene cluster that mediates the biosynthesis of chrodrimanin B, a meroterpenoid that acts as a potent blocker of insect GABA-gated chloride channels. The first step of the pathway is the biosynthesis of 6-hydroxymellein by the polyketide synthase cdmE. The prenyltransferase cdmH acts as a 6-hydroxymellein 5-farnesyltransferase and produces the hydrophobic metabolite verruculide C. The FAD-dependent monooxygenase cdmI further converts verruculide C into verruculide B. The terpene cyclase cdmG then produced the pentacyclic molecule 3-hydroxypentacecilide A, the backbone structure of chrodrimanin B, via folding the farnesyl moiety of the substrate into the chair-boat conformation. The short-chain dehydrogenase/reductase cdmF functions as the 3-OH dehydrogenase that oxidizes the C-3 hydroxyl group of 3-hydroxypentacecilide A and produces chrodrimanin C, the dehydrogenated product of 3-hydroxypentacecilide A. The cytochrome P450 monooxygenase cdmJ then accepts both 3-hydroxypentacecilide A and chrodrimanin C and functions as a C-7-beta-hydroxylase to produce respectively chrodrimanin H and chrodrimanin F. The dioxygenase cdmA accepts chrodrimanin H to afford chrodrimanin E, which is further transformed to chrodrimanin A by the dioxygenase cdmD. CdmA can also accept chrodrimanin C as substrate to convert it into verruculide A, which is further converted into chrodrimanin T by cdmD. The last step of the biosynthesis is proposed to be performed by the acetyltransferase cdmC which acetylates chrodrimanin A to yield chrodrimanin B. The pathway may also lead to the production of additional shunt products, including chrodrimanins T and U. The protein is Terpene cyclase cdmG of Talaromyces verruculosus (Penicillium verruculosum).